Here is a 73-residue protein sequence, read N- to C-terminus: Waprin-Phi2 (73 aa).

The signal sequence occupies residues 1–21; the sequence is MKATLLLLLLFAVILPGTISA. A WAP domain is found at 22–72; the sequence is EQEKPGSCPNVDMPIPPLGLCKTTCSKDSDCSETKKCCKNGCGFMTCTTAR. Cystine bridges form between cysteine 29-cysteine 59, cysteine 42-cysteine 63, cysteine 46-cysteine 58, and cysteine 52-cysteine 68.

The protein belongs to the venom waprin family. As to expression, expressed by the venom gland.

It localises to the secreted. Damages membranes of susceptible bacteria. Has no hemolytic activity. Not toxic to mice. Does not inhibit the proteinases elastase and cathepsin G. The polypeptide is Waprin-Phi2 (Philodryas olfersii (Green snake)).